Reading from the N-terminus, the 182-residue chain is Putative manganese efflux pump MntP (182 aa).

6 helical membrane passes run 6–26 (LIPLIIMAFALGMDAFSVSLG), 37–57 (ILYIGMTIGIFHIIMPFIGMV), 71–91 (HFAGAILLIGLGFYIVYSTIL), 101–121 (IGISLFVFAFGVSIDSFSVGL), 131–151 (IITILLFGFVSMLLAWIGLLI), and 162–182 (YGEIVGGIILVGFGLYILFPI).

It belongs to the MntP (TC 9.B.29) family.

The protein resides in the cell membrane. Functionally, probably functions as a manganese efflux pump. In Bacillus cereus (strain G9842), this protein is Putative manganese efflux pump MntP.